The following is a 242-amino-acid chain: Putative ABC transporter ATP-binding protein TTE0246 (242 aa).

The ABC transporter domain maps to 5–242 (FELKNVSYFY…EKLLLKANLI (238 aa)). ATP is bound at residue 38 to 45 (GANGSGKS).

It belongs to the ABC transporter superfamily.

The protein localises to the cell membrane. Functionally, probably part of an ABC transporter complex. Responsible for energy coupling to the transport system. The chain is Putative ABC transporter ATP-binding protein TTE0246 from Caldanaerobacter subterraneus subsp. tengcongensis (strain DSM 15242 / JCM 11007 / NBRC 100824 / MB4) (Thermoanaerobacter tengcongensis).